Here is a 78-residue protein sequence, read N- to C-terminus: Probable Vpr-like protein (78 aa).

The Nuclear export signal motif lies at 35-43; sequence AIRLLQGLF. A Nuclear localization signal motif is present at residues 45–54; the sequence is RYRFKKPRVD.

It is found in the virion. It localises to the host nucleus. In terms of biological role, seems to function as a Vpr-like protein, since it mediates host cell cycle arrest in G2 phase. Cell cycle arrest creates a favorable environment for maximizing viral expression and production. In Feline immunodeficiency virus (isolate Petaluma) (FIV), this protein is Probable Vpr-like protein.